Consider the following 362-residue polypeptide: Nuclear hormone receptor family member nhr-77 (362 aa).

Residues 8-82 (DPICPVCEFP…AGMKRNLVKQ (75 aa)) constitute a DNA-binding region (nuclear receptor). 2 NR C4-type zinc fingers span residues 11–32 (CPVC…CGAC) and 48–69 (CEKN…FDYC). The region spanning 145–362 (EAEKDVSKIL…KLYIQLGLPF (218 aa)) is the NR LBD domain.

Belongs to the nuclear hormone receptor family.

It is found in the nucleus. Functionally, orphan nuclear receptor. The sequence is that of Nuclear hormone receptor family member nhr-77 (nhr-77) from Caenorhabditis elegans.